The chain runs to 424 residues: D-inositol 3-phosphate glycosyltransferase (424 aa).

His-21 contacts 1D-myo-inositol 3-phosphate. UDP-N-acetyl-alpha-D-glucosamine contacts are provided by residues 27–28 (QP) and Gly-35. 1D-myo-inositol 3-phosphate-binding positions include 32–37 (DAGGMN), Lys-90, Tyr-123, Thr-147, and Arg-167. Arg-241, Lys-246, and Gln-299 together coordinate UDP-N-acetyl-alpha-D-glucosamine. Residues Phe-308, Gln-309, and Ala-311 each contribute to the Mg(2+) site. UDP-N-acetyl-alpha-D-glucosamine is bound by residues Glu-321 and Glu-329. A Mg(2+)-binding site is contributed by Thr-335.

This sequence belongs to the glycosyltransferase group 1 family. MshA subfamily. Homodimer.

The catalysed reaction is 1D-myo-inositol 3-phosphate + UDP-N-acetyl-alpha-D-glucosamine = 1D-myo-inositol 2-acetamido-2-deoxy-alpha-D-glucopyranoside 3-phosphate + UDP + H(+). Functionally, catalyzes the transfer of a N-acetyl-glucosamine moiety to 1D-myo-inositol 3-phosphate to produce 1D-myo-inositol 2-acetamido-2-deoxy-glucopyranoside 3-phosphate in the mycothiol biosynthesis pathway. The polypeptide is D-inositol 3-phosphate glycosyltransferase (Mycobacterium avium (strain 104)).